An 86-amino-acid chain; its full sequence is Small ribosomal subunit protein bS20 (86 aa).

The protein belongs to the bacterial ribosomal protein bS20 family.

Its function is as follows. Binds directly to 16S ribosomal RNA. The protein is Small ribosomal subunit protein bS20 of Bifidobacterium longum (strain DJO10A).